The following is a 484-amino-acid chain: tRNA sulfurtransferase (484 aa).

Residues 63-167 (EAFADRLSCI…RENLYLVVNR (105 aa)) form the THUMP domain. Residues 185–186 (LI), lysine 267, glycine 289, and glutamine 298 contribute to the ATP site. A disulfide bond links cysteine 346 and cysteine 458. The region spanning 406 to 484 (VNSNEVIIDV…GYENVKVYRP (79 aa)) is the Rhodanese domain. The active-site Cysteine persulfide intermediate is cysteine 458.

This sequence belongs to the ThiI family.

The protein resides in the cytoplasm. The catalysed reaction is [ThiI sulfur-carrier protein]-S-sulfanyl-L-cysteine + a uridine in tRNA + 2 reduced [2Fe-2S]-[ferredoxin] + ATP + H(+) = [ThiI sulfur-carrier protein]-L-cysteine + a 4-thiouridine in tRNA + 2 oxidized [2Fe-2S]-[ferredoxin] + AMP + diphosphate. It carries out the reaction [ThiS sulfur-carrier protein]-C-terminal Gly-Gly-AMP + S-sulfanyl-L-cysteinyl-[cysteine desulfurase] + AH2 = [ThiS sulfur-carrier protein]-C-terminal-Gly-aminoethanethioate + L-cysteinyl-[cysteine desulfurase] + A + AMP + 2 H(+). The protein operates within cofactor biosynthesis; thiamine diphosphate biosynthesis. Functionally, catalyzes the ATP-dependent transfer of a sulfur to tRNA to produce 4-thiouridine in position 8 of tRNAs, which functions as a near-UV photosensor. Also catalyzes the transfer of sulfur to the sulfur carrier protein ThiS, forming ThiS-thiocarboxylate. This is a step in the synthesis of thiazole, in the thiamine biosynthesis pathway. The sulfur is donated as persulfide by IscS. The sequence is that of tRNA sulfurtransferase from Shewanella sediminis (strain HAW-EB3).